The primary structure comprises 324 residues: Dolichyl-phosphate beta-glucosyltransferase (324 aa).

The Lumenal portion of the chain corresponds to 1–7 (MAPLLLQ). A helical; Signal-anchor for type II membrane protein membrane pass occupies residues 8-28 (LAVLGAALAAAALVLISIVAF). Residues 29–324 (TTATKMPALH…WRLEQTRKMN (296 aa)) lie on the Cytoplasmic side of the membrane.

The protein belongs to the glycosyltransferase 2 family. Expressed in pancreas, placenta, liver, heart, brain, kidney, skeletal muscle, and lung.

It is found in the endoplasmic reticulum membrane. It catalyses the reaction a di-trans,poly-cis-dolichyl phosphate + UDP-alpha-D-glucose = a di-trans,poly-cis-dolichyl beta-D-glucosyl phosphate + UDP. Its pathway is protein modification; protein glycosylation. Functionally, dolichyl-phosphate beta-glucosyltransferase that operates in the biosynthetic pathway of dolichol-linked oligosaccharides, the glycan precursors employed in protein asparagine (N)-glycosylation. The assembly of dolichol-linked oligosaccharides begins on the cytosolic side of the endoplasmic reticulum membrane and finishes in its lumen. The sequential addition of sugars to dolichol pyrophosphate produces dolichol-linked oligosaccharides containing fourteen sugars, including two GlcNAcs, nine mannoses and three glucoses. Once assembled, the oligosaccharide is transferred from the lipid to nascent proteins by oligosaccharyltransferases. Dolichyl-phosphate beta-glucosyltransferase produces dolichyl beta-D-glucosyl phosphate/Dol-P-Glc, the glucose donor substrate used sequentially by ALG6, ALG8 and ALG10 to add glucose residues on top of the Man(9)GlcNAc(2)-PP-Dol structure. These are the three last steps in the biosynthetic pathway of dolichol-linked oligosaccharides to produce Glc(3)Man(9)GlcNAc(2)-PP-Dol. The enzyme is most probably active on the cytoplasmic side of the endoplasmic reticulum while its product Dol-P-Glc is the substrate for ALG6, ALG8 and ALG11 in the lumen of the endoplasmic reticulum. In Homo sapiens (Human), this protein is Dolichyl-phosphate beta-glucosyltransferase.